The sequence spans 310 residues: UDP-N-acetylenolpyruvoylglucosamine reductase (310 aa).

Positions 27–192 (KIGGKARYIV…LKATFRLQYA (166 aa)) constitute an FAD-binding PCMH-type domain. Arg-171 is an active-site residue. Ser-223 functions as the Proton donor in the catalytic mechanism. Glu-293 is an active-site residue.

It belongs to the MurB family. FAD serves as cofactor.

Its subcellular location is the cytoplasm. It carries out the reaction UDP-N-acetyl-alpha-D-muramate + NADP(+) = UDP-N-acetyl-3-O-(1-carboxyvinyl)-alpha-D-glucosamine + NADPH + H(+). It participates in cell wall biogenesis; peptidoglycan biosynthesis. Its function is as follows. Cell wall formation. This is UDP-N-acetylenolpyruvoylglucosamine reductase from Caldicellulosiruptor saccharolyticus (strain ATCC 43494 / DSM 8903 / Tp8T 6331).